We begin with the raw amino-acid sequence, 209 residues long: Neurotrophin-4 (209 aa).

The first 21 residues, 1–21 (MLPRHSCSLLLFLFLLPSVPM), serve as a signal peptide directing secretion. Residues 22-79 (EPHPPSSTLPPFLAPEWDLLSPRVALSRGAPAGPPLLFLLEAGAYGEPAGAPANRSRR) constitute a propeptide that is removed on maturation. The N-linked (GlcNAc...) asparagine glycan is linked to N75. 3 cysteine pairs are disulfide-bonded: C96-C169, C140-C198, and C157-C200.

The protein belongs to the NGF-beta family.

The protein localises to the secreted. In terms of biological role, target-derived survival factor for peripheral sensory sympathetic neurons. May promote ameloblast differentiation and subsequent reduction in proliferation of ameloblasts. The sequence is that of Neurotrophin-4 (Ntf4) from Mus musculus (Mouse).